We begin with the raw amino-acid sequence, 641 residues long: XK-related protein 6 (641 aa).

Disordered stretches follow at residues 20–47 (LDEA…DGSE) and 84–120 (RSAA…PPPP). Over residues 34-46 (PGGGGCGGGGDGS) the composition is skewed to gly residues. The segment covering 107 to 120 (PPTPSAARPEPPPP) has biased composition (pro residues). The next 7 helical transmembrane spans lie at 130 to 150 (LWIV…LWLA), 159 to 179 (YVYF…VQSL), 318 to 338 (TLPC…LASY), 372 to 392 (VISF…FVVV), 413 to 433 (WEEI…WFNV), 442 to 462 (MFAY…LWYF), and 473 to 493 (AVPA…MMLL).

Belongs to the XK family.

It is found in the cell membrane. In Homo sapiens (Human), this protein is XK-related protein 6.